The sequence spans 396 residues: Cathepsin D (396 aa).

Residues 1-18 (MKMLLLCVFSALALTNDA) form the signal peptide. Positions 19–61 (LVRIPLKKFRSIRRQLTDSGKRAEELLADHHSLKYNLSFPASN) are cleaved as a propeptide — activation peptide. A Peptidase A1 domain is found at 76–393 (YYGEIGLGTP…DRDANRVGFA (318 aa)). The active site involves Asp94. Cys107 and Cys114 are oxidised to a cystine. N-linked (GlcNAc...) asparagine glycosylation is found at Asn131 and Asn249. Cys272 and Cys276 are joined by a disulfide. Asp281 is a catalytic residue. Cys315 and Cys352 are disulfide-bonded.

The protein belongs to the peptidase A1 family. As to quaternary structure, monomer.

It is found in the lysosome. It catalyses the reaction Specificity similar to, but narrower than, that of pepsin A. Does not cleave the 4-Gln-|-His-5 bond in B chain of insulin.. Inhibited by pepstatin. Functionally, acid protease active in intracellular protein breakdown. This is Cathepsin D (ctsd) from Chionodraco hamatus (Antarctic teleost icefish).